We begin with the raw amino-acid sequence, 535 residues long: Protein PyrBI (535 aa).

The interval 1-341 (MENKFMGRSL…MIAGKIGDDY (341 aa)) is aspartate carbamoyltransferase. Residues 342–370 (KGPEPKSCERVEDEDYIVEVPINNSKESK) form a linker region. The segment at 371 to 535 (VETFSEGVRP…FKEIWGEKKN (165 aa)) is aspartate carbamoyltransferase regulatory region. Cys-488, Cys-493, Cys-517, and Cys-520 together coordinate Zn(2+).

It in the N-terminal section; belongs to the aspartate/ornithine carbamoyltransferase superfamily. ATCase family. The protein in the C-terminal section; belongs to the PyrI family.

The catalysed reaction is carbamoyl phosphate + L-aspartate = N-carbamoyl-L-aspartate + phosphate + H(+). It functions in the pathway pyrimidine metabolism; UMP biosynthesis via de novo pathway; (S)-dihydroorotate from bicarbonate: step 2/3. The polypeptide is Protein PyrBI (pyrBI) (Treponema denticola (strain ATCC 35405 / DSM 14222 / CIP 103919 / JCM 8153 / KCTC 15104)).